A 171-amino-acid polypeptide reads, in one-letter code: Co-chaperone protein HscB homolog (171 aa).

Residues 2-74 enclose the J domain; it reads NHFELFGLPN…VSRAEYILSE (73 aa).

It belongs to the HscB family. In terms of assembly, interacts with HscA and stimulates its ATPase activity.

Functionally, co-chaperone involved in the maturation of iron-sulfur cluster-containing proteins. Seems to help targeting proteins to be folded toward HscA. The chain is Co-chaperone protein HscB homolog from Aliivibrio fischeri (strain ATCC 700601 / ES114) (Vibrio fischeri).